The primary structure comprises 499 residues: Glycerol kinase (499 aa).

Position 13 (threonine 13) interacts with ADP. Positions 13, 14, and 15 each coordinate ATP. Threonine 13 contributes to the sn-glycerol 3-phosphate binding site. Arginine 17 lines the ADP pocket. The sn-glycerol 3-phosphate site is built by arginine 83, glutamate 84, tyrosine 135, and aspartate 244. Glycerol-binding residues include arginine 83, glutamate 84, tyrosine 135, aspartate 244, and glutamine 245. Residues threonine 266 and glycine 309 each coordinate ADP. ATP is bound by residues threonine 266, glycine 309, glutamine 313, and glycine 410. Residues glycine 410 and asparagine 414 each coordinate ADP.

This sequence belongs to the FGGY kinase family.

It catalyses the reaction glycerol + ATP = sn-glycerol 3-phosphate + ADP + H(+). Its pathway is polyol metabolism; glycerol degradation via glycerol kinase pathway; sn-glycerol 3-phosphate from glycerol: step 1/1. With respect to regulation, inhibited by fructose 1,6-bisphosphate (FBP). Functionally, key enzyme in the regulation of glycerol uptake and metabolism. Catalyzes the phosphorylation of glycerol to yield sn-glycerol 3-phosphate. In Paraburkholderia xenovorans (strain LB400), this protein is Glycerol kinase.